We begin with the raw amino-acid sequence, 266 residues long: Undecaprenyl-diphosphatase (266 aa).

The next 8 membrane-spanning stretches (helical) occupy residues 2 to 22 (INIL…FLPI), 39 to 59 (LPII…IIYY), 86 to 106 (LKLI…GTFI), 112 to 132 (MFIL…ILML), 145 to 165 (ILLV…PGIS), 184 to 204 (AFEI…LFKY), 212 to 232 (MVLN…VGII), and 246 to 266 (LYYF…FFRI).

This sequence belongs to the UppP family.

It is found in the cell inner membrane. It catalyses the reaction di-trans,octa-cis-undecaprenyl diphosphate + H2O = di-trans,octa-cis-undecaprenyl phosphate + phosphate + H(+). Catalyzes the dephosphorylation of undecaprenyl diphosphate (UPP). Confers resistance to bacitracin. The chain is Undecaprenyl-diphosphatase from Borrelia garinii subsp. bavariensis (strain ATCC BAA-2496 / DSM 23469 / PBi) (Borreliella bavariensis).